Here is a 266-residue protein sequence, read N- to C-terminus: Undecaprenyl-diphosphatase (266 aa).

8 helical membrane-spanning segments follow: residues 4–24, 41–61, 80–100, 105–125, 139–159, 182–202, 212–232, and 245–265; these read WVLA…PVSS, GKVF…SVYF, FVAS…LLHD, VLFE…FALL, AGAF…LALI, AAEF…TVDL, DDAG…IITV, and APFA…LAFI.

It belongs to the UppP family.

Its subcellular location is the cell inner membrane. It catalyses the reaction di-trans,octa-cis-undecaprenyl diphosphate + H2O = di-trans,octa-cis-undecaprenyl phosphate + phosphate + H(+). Catalyzes the dephosphorylation of undecaprenyl diphosphate (UPP). Confers resistance to bacitracin. This chain is Undecaprenyl-diphosphatase, found in Phenylobacterium zucineum (strain HLK1).